Consider the following 533-residue polypeptide: MVKVWKIGFGVFLPTALLFSACSFKDYIPTPSFRKDFSTENNFVKNKVPGKDDIYSKFYDLTFSLNFVNNQAQEFGTGWLIDWKGDENKNLSKNKEGQTASQTRSSSEQTTDQDANLFTAYIATNLHVADGLKNDQDYAPYNKDGWGQPYPYQQKTQSFLLGKYTKPNVQLVKTNYEKPEDAVIEQKLKEDSLLFIQTSTLPKTAYAAIDPVNFSYNPTRTNGFWTAGKYNVYNGGNSIGNYADFAVIEVPLVLSNPNDAKIYQEWIRPATQAYKYLGDVEGLFAKKGYRSYIQDFYHLLGYPVTKNTKSEFILGQSQGTVNHMSFSNDESNTTNTITKASLTQQPHKEQSAYVVRESGLPTLTMNVDKYTGAKGTHLVNVDQITDLSLGDGLIDFGGLSRFILQYHNVNYKQFGYGTILWDTNFGGGSSGSAIFNQNKQINSIYFGALVNVTTDRNENVGLGLGQILRAPNTFNSSHEVPYSYDLIFGDVNTTNFYAQFAKKHNTHMWSKIQSTQNGEIGFHKNSKTGQQRH.

The signal sequence occupies residues 1–21; that stretch reads MVKVWKIGFGVFLPTALLFSA. Cys22 is lipidated: N-palmitoyl cysteine. Cys22 carries S-diacylglycerol cysteine lipidation. The interval 91 to 111 is disordered; that stretch reads LSKNKEGQTASQTRSSSEQTT. Positions 97-111 are enriched in polar residues; sequence GQTASQTRSSSEQTT.

The protein belongs to the MG067/MG068/MG395 family.

It localises to the cell membrane. This is an uncharacterized protein from Mycoplasma pneumoniae (strain ATCC 29342 / M129 / Subtype 1) (Mycoplasmoides pneumoniae).